We begin with the raw amino-acid sequence, 1391 residues long: DNA-directed RNA polymerase subunit beta' (1391 aa).

Residues Cys-72, Cys-74, Cys-87, and Cys-90 each contribute to the Zn(2+) site. Positions 462, 464, and 466 each coordinate Mg(2+). Cys-816, Cys-890, Cys-897, and Cys-900 together coordinate Zn(2+).

The protein belongs to the RNA polymerase beta' chain family. The RNAP catalytic core consists of 2 alpha, 1 beta, 1 beta' and 1 omega subunit. When a sigma factor is associated with the core the holoenzyme is formed, which can initiate transcription. It depends on Mg(2+) as a cofactor. Zn(2+) serves as cofactor.

It carries out the reaction RNA(n) + a ribonucleoside 5'-triphosphate = RNA(n+1) + diphosphate. In terms of biological role, DNA-dependent RNA polymerase catalyzes the transcription of DNA into RNA using the four ribonucleoside triphosphates as substrates. In Neisseria meningitidis serogroup C (strain 053442), this protein is DNA-directed RNA polymerase subunit beta'.